Here is a 290-residue protein sequence, read N- to C-terminus: Signal recognition particle receptor FtsY (290 aa).

GTP contacts are provided by residues 91-98 (GTNGSGKT), 173-177 (DTSGR), and 237-240 (TKVD).

The protein belongs to the GTP-binding SRP family. FtsY subfamily. Part of the signal recognition particle protein translocation system, which is composed of SRP and FtsY.

Its subcellular location is the cell inner membrane. It is found in the cytoplasm. It catalyses the reaction GTP + H2O = GDP + phosphate + H(+). Its function is as follows. Involved in targeting and insertion of nascent membrane proteins into the cytoplasmic membrane. Acts as a receptor for the complex formed by the signal recognition particle (SRP) and the ribosome-nascent chain (RNC). The protein is Signal recognition particle receptor FtsY of Chlamydia pneumoniae (Chlamydophila pneumoniae).